Reading from the N-terminus, the 1047-residue chain is Protein masquerade (1047 aa).

A signal peptide spans 1-30 (MPRHSSTMSRLVLPLIFSILLVSKPSPSQA). The interval 54–87 (KDCPGVCVHTLATLICYEVLDDVACPSPSMKCCI) is CLIP 1. 3 cysteine pairs are disulfide-bonded: Cys-56-Cys-85, Cys-60-Cys-78, and Cys-69-Cys-86. Asn-95 is a glycosylation site (N-linked (GlcNAc...) asparagine). 2 stretches are compositionally biased toward low complexity: residues 98-139 (AVRA…STTP) and 148-175 (KRPA…VATA). The interval 98–189 (AVRATTTPKT…KEEATKADDA (92 aa)) is disordered. Basic and acidic residues predominate over residues 176–189 (KPKDKEEATKADDA). Residues 192 to 224 (DCTGVCVADRIAEYCEAYLTSDGLCKEGTKCCV) are CLIP 2. Disulfide bonds link Cys-193-Cys-222, Cys-197-Cys-216, and Cys-206-Cys-223. Residue Asn-251 is glycosylated (N-linked (GlcNAc...) asparagine). The segment at 252–335 (QTLSEKSAPA…PLSNKLKSGQ (84 aa)) is disordered. The segment covering 263-280 (SSSTSTTSTTTTTSTTTT) has biased composition (low complexity). Asn-287 carries an N-linked (GlcNAc...) asparagine glycan. Residues 307–325 (AAEEEEEQETEEDGEEEEP) show a composition bias toward acidic residues. A CLIP 3 region spans residues 343-374 (ECEGECMNGIFAIFCDDIDSDAFCPGEESCCV). Disulfide bonds link Cys-344/Cys-372, Cys-348/Cys-366, and Cys-357/Cys-373. Residues 376–428 (GGASEATPSSKAPPTKPAIKHAPKPAAKPARPASPPPAPPSSTSGGGGGGDFL) are disordered. The tract at residues 457–492 (RCPGFCLLNIMAAFCERPSVLVSTPTTCAKGSVCCD) is CLIP 4. Disulfide bonds link Cys-458–Cys-490, Cys-462–Cys-484, and Cys-471–Cys-491. Residues 498 to 527 (APKPKLPPPTPSPTASPTAPPYVLPNTPSP) are disordered. Positions 501-527 (PKLPPPTPSPTASPTAPPYVLPNTPSP) are enriched in pro residues. The CLIP 5 stretch occupies residues 532-567 (ECPGSCIVSLLSFTCFKNAEMTDLFRCKRSGQICCA). Cystine bridges form between Cys-533–Cys-565, Cys-537–Cys-558, and Cys-546–Cys-566. Asn-582 is a glycosylation site (N-linked (GlcNAc...) asparagine). The tract at residues 583 to 673 (DTAYYPAPPP…TTTTTTTTPR (91 aa)) is disordered. Pro residues-rich tracts occupy residues 588–606 (PAPP…PQTP), 613–638 (NPPP…PPAP), and 650–661 (GLPPQPQPPMTT). Positions 662 to 672 (PPTTTTTTTTP) are enriched in low complexity. Cystine bridges form between Cys-682–Cys-916, Cys-829–Cys-845, Cys-930–Cys-1001, Cys-961–Cys-981, and Cys-991–Cys-1019. 2 N-linked (GlcNAc...) asparagine glycosylation sites follow: Asn-726 and Asn-794. The segment at 803–1043 (VVGGEDGENG…FIGWINQIIS (241 aa)) is peptidase S1.

This sequence belongs to the peptidase S1 family. CLIP subfamily. Post-translationally, proteolytically cleaved and thereafter secreted.

It localises to the secreted. The protein resides in the cell projection. It is found in the axon. In embryogenesis, has a role in somatic muscle attachment and in the development of axonal pathways probably by stabilizing cell-matrix adhesion and/or by acting as a competitive antagonist of serine proteases. The chain is Protein masquerade from Drosophila melanogaster (Fruit fly).